Consider the following 217-residue polypeptide: 3-demethoxyubiquinol 3-hydroxylase (217 aa).

Glutamate 66, glutamate 96, histidine 99, glutamate 148, glutamate 180, and histidine 183 together coordinate Fe cation.

The protein belongs to the COQ7 family. Requires Fe cation as cofactor.

Its subcellular location is the cell membrane. The catalysed reaction is a 5-methoxy-2-methyl-3-(all-trans-polyprenyl)benzene-1,4-diol + AH2 + O2 = a 3-demethylubiquinol + A + H2O. It participates in cofactor biosynthesis; ubiquinone biosynthesis. Its function is as follows. Catalyzes the hydroxylation of 2-nonaprenyl-3-methyl-6-methoxy-1,4-benzoquinol during ubiquinone biosynthesis. The protein is 3-demethoxyubiquinol 3-hydroxylase of Xanthomonas axonopodis pv. citri (strain 306).